Here is a 183-residue protein sequence, read N- to C-terminus: uncharacterized protein (183 aa).

A Macro domain is found at methionine 1–glycine 182.

This is an uncharacterized protein from Pyrococcus furiosus (strain ATCC 43587 / DSM 3638 / JCM 8422 / Vc1).